The following is a 1081-amino-acid chain: Dyslexia-associated protein KIAA0319 homolog (1081 aa).

The first 22 residues, 1 to 22, serve as a signal peptide directing secretion; the sequence is MVSPPGVLSSLLLLAAMAGGSS. The MANSC domain occupies 23 to 99; sequence QQCSEGRTYS…PRTTGPIRSY (77 aa). Residues 23–964 are Extracellular-facing; sequence QQCSEGRTYS…WDGESNCEWS (942 aa). Disordered regions lie at residues 141-160, 168-216, and 228-298; these read LPFL…SDDY, LQPS…DLTP, and NEST…TTVE. Polar residues-rich tracts occupy residues 197-209, 228-253, and 283-298; these read ASAT…ASTE, NEST…TASP, and HNPS…TTVE. PKD domains lie at 345–436, 444–533, 539–629, 630–723, and 729–820; these read AVSA…VMPA, VAIV…IRGS, VANA…VQAE, NNQA…VKKE, and RAQA…VLPD. 2 N-linked (GlcNAc...) asparagine glycosylation sites follow: N430 and N522. The chain crosses the membrane as a helical span at residues 965 to 985; the sequence is VFYVAALALTLTVLTGAVTWV. At 986–1081 the chain is on the cytoplasmic side; sequence CICCCRRRKR…VSFGYYSKDR (96 aa). An Endocytosis signal motif is present at residues 1004 to 1007; it reads YTIL.

In terms of assembly, homodimer. Interacts with AP2M1; required for clathrin-mediated endocytosis. Post-translationally, N-glycosylated. In terms of processing, O-glycosylated. Shedding of the extracellular domain and intramembrane cleavage produce several proteolytic products. The intramembrane cleavage releases a soluble cytoplasmic polypeptide that translocates to the nucleolus. As to expression, highly expressed during development in ventricular zone, intermediate zone, cortical plate, striatum, hippocampus, and brain stem.

It localises to the cell membrane. It is found in the early endosome membrane. Its function is as follows. Involved in neuronal migration during development of the cerebral neocortex. May function in a cell autonomous and a non-cell autonomous manner and play a role in appropriate adhesion between migrating neurons and radial glial fibers. May also regulate growth and differentiation of dendrites. The chain is Dyslexia-associated protein KIAA0319 homolog from Rattus norvegicus (Rat).